Reading from the N-terminus, the 61-residue chain is Small ribosomal subunit protein uS14 (61 aa).

Zn(2+)-binding residues include Cys24, Cys27, Cys40, and Cys43.

This sequence belongs to the universal ribosomal protein uS14 family. Zinc-binding uS14 subfamily. As to quaternary structure, part of the 30S ribosomal subunit. Contacts proteins S3 and S10. Requires Zn(2+) as cofactor.

Binds 16S rRNA, required for the assembly of 30S particles and may also be responsible for determining the conformation of the 16S rRNA at the A site. In Thermosipho africanus (strain TCF52B), this protein is Small ribosomal subunit protein uS14.